Here is a 126-residue protein sequence, read N- to C-terminus: Glycine cleavage system H protein (126 aa).

One can recognise a Lipoyl-binding domain in the interval 21-103 (TVTIGISEHA…YDGGWIVKVK (83 aa)). K62 bears the N6-lipoyllysine mark.

Belongs to the GcvH family. In terms of assembly, the glycine cleavage system is composed of four proteins: P, T, L and H. It depends on (R)-lipoate as a cofactor.

In terms of biological role, the glycine cleavage system catalyzes the degradation of glycine. The H protein shuttles the methylamine group of glycine from the P protein to the T protein. This is Glycine cleavage system H protein from Vibrio cholerae serotype O1 (strain ATCC 39541 / Classical Ogawa 395 / O395).